We begin with the raw amino-acid sequence, 229 residues long: UPF0128 protein aq_756 (229 aa).

Belongs to the UPF0128 family.

The polypeptide is UPF0128 protein aq_756 (Aquifex aeolicus (strain VF5)).